A 215-amino-acid chain; its full sequence is Ribosome maturation factor RimP (215 aa).

The interval 180–215 is disordered; the sequence is KDNRARKEAKKRRGEPDDDVPEGAEADATEEHEQES. Residues 195 to 207 show a composition bias toward acidic residues; it reads PDDDVPEGAEADA.

Belongs to the RimP family.

The protein resides in the cytoplasm. In terms of biological role, required for maturation of 30S ribosomal subunits. This is Ribosome maturation factor RimP from Mesorhizobium japonicum (strain LMG 29417 / CECT 9101 / MAFF 303099) (Mesorhizobium loti (strain MAFF 303099)).